A 69-amino-acid chain; its full sequence is Mu-conotoxin-like Am3.3 (69 aa).

The signal sequence occupies residues 1 to 20; the sequence is MMSKLGVLLTICLLLFPLTA. Positions 21–52 are excised as a propeptide; the sequence is VPLDGDQPADRPAERMQDDISSENHPMFDAIR. Cysteine amide is present on Cys-68.

The protein belongs to the conotoxin M family. Is not hydroxylated. Post-translationally, contains 3 disulfide bonds. In terms of tissue distribution, expressed by the venom duct.

The protein localises to the secreted. Functionally, mu-conotoxins block voltage-gated sodium channels (Nav). In Conus amadis (Amadis cone), this protein is Mu-conotoxin-like Am3.3.